The following is a 218-amino-acid chain: Large ribosomal subunit protein uL3 (218 aa).

Q153 carries the post-translational modification N5-methylglutamine.

The protein belongs to the universal ribosomal protein uL3 family. In terms of assembly, part of the 50S ribosomal subunit. Forms a cluster with proteins L14 and L19. Methylated by PrmB.

Functionally, one of the primary rRNA binding proteins, it binds directly near the 3'-end of the 23S rRNA, where it nucleates assembly of the 50S subunit. This is Large ribosomal subunit protein uL3 from Alkalilimnicola ehrlichii (strain ATCC BAA-1101 / DSM 17681 / MLHE-1).